Consider the following 238-residue polypeptide: Cysteine-rich venom protein pseudechetoxin-like (238 aa).

A signal peptide spans 1–19 (MIAFTVLLSLAAVLQQSSG). Positions 20-28 (TVDFASESS) are excised as a propeptide. The SCP domain maps to 38 to 164 (VDKHNDLRRS…STKYLYVCQY (127 aa)). 8 disulfides stabilise this stretch: C75–C153, C92–C165, C148–C162, C184–C191, C187–C196, C200–C233, C209–C227, and C218–C231. In terms of domain architecture, ShKT spans 200–233 (CKHNNDFSNCKALAKKSKCQTEWIKSKCPATCFC).

This sequence belongs to the CRISP family. As to expression, expressed by the venom gland.

Its subcellular location is the secreted. Its function is as follows. Blocks olfactory (CNGA2) and retinal (CNGA1) CNG channel currents. Does not affect neither depolarization- nor caffeine-induced contraction of smooth muscle. This Oxyuranus scutellatus scutellatus (Australian taipan) protein is Cysteine-rich venom protein pseudechetoxin-like.